The following is a 20-amino-acid chain: Expansin-B (20 aa).

Positions 1 to 20 are disordered; sequence GPPKVAPGKXISASFGGEWL.

The protein belongs to the expansin family. Expansin B subfamily.

The protein localises to the secreted. Its subcellular location is the cell wall. It is found in the membrane. Functionally, may aid fertilization by loosening the cell wall of the stigma and style, thereby facilitating penetration of the pollen tube. Acts selectively on grass cell walls, which are relatively poor in pectins and xyloglucans and rich in glucuronoarabinoxylans and (1-3),(1-4)-beta-D-glucans, when compared with cell walls of other angiosperms, including other monocots. In Paspalum notatum (Bahia grass), this protein is Expansin-B.